The primary structure comprises 372 residues: Nickel transporter NicT (372 aa).

8 helical membrane-spanning segments follow: residues 30 to 50 (LMFA…TLLV), 55 to 75 (LSLG…TLGL), 104 to 124 (VGFF…VMLV), 152 to 172 (ISGA…VGIV), 218 to 238 (VGFL…LVLA), 245 to 265 (GLPW…MCLL), 294 to 314 (VTGL…LGLI), and 335 to 355 (TVGF…LLVW).

Belongs to the NiCoT transporter (TC 2.A.52) family.

The protein resides in the cell membrane. It catalyses the reaction Ni(2+)(in) = Ni(2+)(out). Export of the fluoroquinolone antibiotic norfloxacin is inhibited by the proton ionophore carbonyl cyanide m-chlorophenylhydrazone (CCCP). Nickel may influence the extrusion of antibiotics possibly by facilitating the proton motive force-dependent efflux process. In terms of biological role, involved in nickel uptake. In addition, acts as a drug efflux pump and contributes to moderate tolerance towards different classes of antibiotics, including fluoroquinolones, aminoglycosides and the anti-TB drug isoniazid, with a preference for fluoroquinolones. The drug efflux function is probably dependent on proton motive force (pmf) or ion gradient, and might be facilitated by the presence of Ni(2+) ions. This chain is Nickel transporter NicT, found in Mycobacterium tuberculosis (strain ATCC 25618 / H37Rv).